The chain runs to 685 residues: Acetate--CoA ligase [ADP-forming] I (685 aa).

The 37-residue stretch at 477-513 folds into the ATP-grasp domain; it reads LPVLEAYGIEVAPYGIARNVDEARDIAESIGYPVVLK. An ATP-binding site is contributed by 503–514; sequence AESIGYPVVLKV.

The protein in the N-terminal section; belongs to the acetate CoA ligase alpha subunit family. In the C-terminal section; belongs to the acetate CoA ligase beta subunit family. Homodimer.

It carries out the reaction acetate + ATP + CoA = acetyl-CoA + ADP + phosphate. Activity requires divalent metal cations. Catalyzes the reversible formation of acetate and ATP from acetyl-CoA by using ADP and phosphate. Can use other substrates such as propionyl-CoA and butyryl-CoA, but not phenylacetyl-CoA. Seems to be involved primarily in the conversion of acetyl-CoA to acetate. Participates in the degradation of branched-chain amino acids via branched-chain-acyl-CoA esters. This chain is Acetate--CoA ligase [ADP-forming] I, found in Archaeoglobus fulgidus (strain ATCC 49558 / DSM 4304 / JCM 9628 / NBRC 100126 / VC-16).